The following is a 462-amino-acid chain: Argininosuccinate lyase (462 aa).

Belongs to the lyase 1 family. Argininosuccinate lyase subfamily.

The protein resides in the cytoplasm. It catalyses the reaction 2-(N(omega)-L-arginino)succinate = fumarate + L-arginine. The protein operates within amino-acid biosynthesis; L-arginine biosynthesis; L-arginine from L-ornithine and carbamoyl phosphate: step 3/3. This Bacillus mycoides (strain KBAB4) (Bacillus weihenstephanensis) protein is Argininosuccinate lyase.